A 146-amino-acid polypeptide reads, in one-letter code: Ribonuclease H (146 aa).

The RNase H type-1 domain maps to 1–143; the sequence is MEKTITIYTD…CDELARLAIK (143 aa). Mg(2+)-binding residues include aspartate 10, glutamate 48, aspartate 70, and aspartate 135.

This sequence belongs to the RNase H family. As to quaternary structure, monomer. The cofactor is Mg(2+).

It localises to the cytoplasm. It carries out the reaction Endonucleolytic cleavage to 5'-phosphomonoester.. Functionally, endonuclease that specifically degrades the RNA of RNA-DNA hybrids. This is Ribonuclease H from Chlorobaculum parvum (strain DSM 263 / NCIMB 8327) (Chlorobium vibrioforme subsp. thiosulfatophilum).